A 527-amino-acid polypeptide reads, in one-letter code: Baeyer-Villiger monooxygenase (527 aa).

FAD is bound by residues Ser36, Glu56, 64 to 67 (TWRV), Asp76, Tyr82, and Ile125. NADP(+) is bound at residue 74–76 (ACD). NADP(+) contacts are provided by residues 199 to 205 (TGASAIQ), 222 to 223 (RT), and 308 to 309 (KR). Met415 contributes to the FAD binding site.

The protein belongs to the FAD-binding monooxygenase family. The cofactor is FAD.

Catalyzes a Baeyer-Villiger oxidation reaction, i.e. the insertion of an oxygen atom into a carbon-carbon bond adjacent to a carbonyl, which converts ketones to esters or lactones using NADPH and/or NADH as an electron donor. Thus, can convert bicyclo[3.2.0]hept-2-en-6-one into the oxidative lactone products 2-oxabicyclo[3.3.0]oct-6-en-3-one and 3-oxabicyclo[3.3.0]oct-6-en-2-one. Is also able to catalyze the sulfoxidation of methyl phenyl sulfide (thioanisole). The chain is Baeyer-Villiger monooxygenase from Pseudomonas aeruginosa (strain ATCC 15692 / DSM 22644 / CIP 104116 / JCM 14847 / LMG 12228 / 1C / PRS 101 / PAO1).